The primary structure comprises 404 residues: uncharacterized protein (404 aa).

The segment covering Val262–Ala278 has biased composition (polar residues). 2 disordered regions span residues Val262 to Leu307 and Met319 to Asp340. Phosphoserine is present on residues Ser268, Ser276, and Ser279. Phosphothreonine is present on residues Thr290 and Thr293. Ser304, Ser306, Ser324, Ser358, and Ser362 each carry phosphoserine. Residues Met319–Asp336 are compositionally biased toward basic and acidic residues.

This is an uncharacterized protein from Mus musculus (Mouse).